The chain runs to 315 residues: L-lactate dehydrogenase (315 aa).

Residues valine 16, aspartate 37, and 81-82 (GA) each bind NAD(+). Residues glutamine 84, arginine 90, and 122–125 (NPVD) each bind substrate. NAD(+) contacts are provided by residues 120 to 122 (VSN) and serine 145. A substrate-binding site is contributed by 150-153 (DTAR). The beta-D-fructose 1,6-bisphosphate site is built by arginine 155 and histidine 170. Histidine 177 acts as the Proton acceptor in catalysis. A Phosphotyrosine modification is found at tyrosine 224. Threonine 233 lines the substrate pocket.

The protein belongs to the LDH/MDH superfamily. LDH family. In terms of assembly, homotetramer.

The protein resides in the cytoplasm. It catalyses the reaction (S)-lactate + NAD(+) = pyruvate + NADH + H(+). Its pathway is fermentation; pyruvate fermentation to lactate; (S)-lactate from pyruvate: step 1/1. Its activity is regulated as follows. Allosterically activated by fructose 1,6-bisphosphate (FBP). Functionally, catalyzes the conversion of lactate to pyruvate. This Treponema denticola (strain ATCC 35405 / DSM 14222 / CIP 103919 / JCM 8153 / KCTC 15104) protein is L-lactate dehydrogenase.